The sequence spans 220 residues: HTH-type transcriptional repressor KstR (220 aa).

Residues 36 to 96 (RERRKRILDA…SALGREFSRI (61 aa)) form the HTH tetR-type domain. The H-T-H motif DNA-binding region spans 59 to 78 (QMRAVADRADVAVGTLYRYF).

As to quaternary structure, homodimer.

In terms of biological role, controls the expression of genes used for utilizing diverse lipids as energy sources. This Mycobacterium tuberculosis (strain ATCC 25618 / H37Rv) protein is HTH-type transcriptional repressor KstR (kstR).